The sequence spans 64 residues: UPF0434 protein BAB2_0345 (64 aa).

The protein belongs to the UPF0434 family.

In Brucella abortus (strain 2308), this protein is UPF0434 protein BAB2_0345.